Here is a 940-residue protein sequence, read N- to C-terminus: Translation initiation factor IF-2 (940 aa).

2 stretches are compositionally biased toward low complexity: residues 138-147 (APVEVVAEPE) and 161-208 (PVVV…ITEL). The segment at 138-354 (APVEVVAEPE…DRQTFQAPTE (217 aa)) is disordered. 2 stretches are compositionally biased toward basic and acidic residues: residues 214 to 271 (IAAR…EEAA) and 289 to 311 (AKAD…DGAK). A tr-type G domain is found at 440–609 (PRAPVVTVMG…LLQAEVLELT (170 aa)). The interval 449–456 (GHVDHGKT) is G1. 449–456 (GHVDHGKT) is a GTP binding site. The interval 474 to 478 (GITQH) is G2. The tract at residues 495–498 (DTPG) is G3. Residues 495–499 (DTPGH) and 549–552 (TKID) each bind GTP. A G4 region spans residues 549-552 (TKID). Residues 585–587 (SAK) are G5.

It belongs to the TRAFAC class translation factor GTPase superfamily. Classic translation factor GTPase family. IF-2 subfamily.

Its subcellular location is the cytoplasm. Functionally, one of the essential components for the initiation of protein synthesis. Protects formylmethionyl-tRNA from spontaneous hydrolysis and promotes its binding to the 30S ribosomal subunits. Also involved in the hydrolysis of GTP during the formation of the 70S ribosomal complex. The sequence is that of Translation initiation factor IF-2 from Azoarcus sp. (strain BH72).